Consider the following 197-residue polypeptide: Inner membrane protein RclC (197 aa).

At Met1–Gly15 the chain is on the periplasmic side. Residues Leu16–Val36 traverse the membrane as a helical segment. Residues Pro37 to Asn85 are Cytoplasmic-facing. Residues Thr86–Ala106 traverse the membrane as a helical segment. Residues Asn107–Trp112 are Periplasmic-facing. A helical transmembrane segment spans residues Leu113–Ile133. The Cytoplasmic segment spans residues Thr134 to Tyr197.

It localises to the cell inner membrane. Probably involved in reactive chlorine species (RCS) stress resistance. This Escherichia coli (strain K12) protein is Inner membrane protein RclC (rclC).